The primary structure comprises 372 residues: Zinc finger protein dpff-1 (372 aa).

The disordered stretch occupies residues 108–204 (VGPTTESVSD…SRSIVKETKY (97 aa)). The span at 109–131 (GPTTESVSDSSNDSTTIRPSRQT) shows a compositional bias: polar residues. Residues 132–141 (QIKEEYRDDY) are compositionally biased toward basic and acidic residues. The span at 142 to 158 (VLDDELSPDEFGSDEDD) shows a compositional bias: acidic residues. Residues 184–196 (TTRSSVSRLTPSR) show a composition bias toward polar residues. Residues 212–235 (YPCDKCSAKYKSLAGLSYHQSYLH) form a C2H2-type zinc finger. 2 consecutive PHD-type zinc fingers follow at residues 256–314 (SCDF…CKSC) and 316–361 (ICGT…CQVE).

The protein belongs to the requiem/DPF family.

The protein resides in the nucleus. It is found in the cytoplasm. In terms of biological role, probable transcription factor, involved in meiosis and stress protection. The protein is Zinc finger protein dpff-1 of Caenorhabditis elegans.